The sequence spans 258 residues: Acyl-[acyl-carrier-protein]--UDP-N-acetylglucosamine O-acyltransferase (258 aa).

Belongs to the transferase hexapeptide repeat family. LpxA subfamily. Homotrimer.

Its subcellular location is the cytoplasm. It catalyses the reaction a (3R)-hydroxyacyl-[ACP] + UDP-N-acetyl-alpha-D-glucosamine = a UDP-3-O-[(3R)-3-hydroxyacyl]-N-acetyl-alpha-D-glucosamine + holo-[ACP]. It participates in glycolipid biosynthesis; lipid IV(A) biosynthesis; lipid IV(A) from (3R)-3-hydroxytetradecanoyl-[acyl-carrier-protein] and UDP-N-acetyl-alpha-D-glucosamine: step 1/6. Involved in the biosynthesis of lipid A, a phosphorylated glycolipid that anchors the lipopolysaccharide to the outer membrane of the cell. The chain is Acyl-[acyl-carrier-protein]--UDP-N-acetylglucosamine O-acyltransferase from Pseudomonas fluorescens (strain ATCC BAA-477 / NRRL B-23932 / Pf-5).